The following is a 1303-amino-acid chain: DNA-directed RNA polymerase subunit beta'' (1303 aa).

4 residues coordinate Zn(2+): C225, C299, C306, and C309.

It belongs to the RNA polymerase beta' chain family. RpoC2 subfamily. In plastids the minimal PEP RNA polymerase catalytic core is composed of four subunits: alpha, beta, beta', and beta''. When a (nuclear-encoded) sigma factor is associated with the core the holoenzyme is formed, which can initiate transcription. Requires Zn(2+) as cofactor.

The protein resides in the plastid. The protein localises to the chloroplast. It carries out the reaction RNA(n) + a ribonucleoside 5'-triphosphate = RNA(n+1) + diphosphate. DNA-dependent RNA polymerase catalyzes the transcription of DNA into RNA using the four ribonucleoside triphosphates as substrates. This chain is DNA-directed RNA polymerase subunit beta'', found in Rhodomonas salina (Cryptomonas salina).